A 183-amino-acid chain; its full sequence is uncharacterized protein (183 aa).

One can recognise a Macro domain in the interval 1-182 (MIKVVKGDIT…KALKIVGQGG (182 aa)).

This is an uncharacterized protein from Pyrococcus furiosus (strain ATCC 43587 / DSM 3638 / JCM 8422 / Vc1).